The sequence spans 564 residues: Bifunctional sesquiterpene synthase 1 (564 aa).

Residues Asp317, Asp321, Asp461, and Glu469 each coordinate Mg(2+). Positions 317–321 match the DDXXD motif motif; the sequence is DDTFD.

Belongs to the terpene synthase family. It depends on Mg(2+) as a cofactor.

It catalyses the reaction (2E,6E)-farnesyl diphosphate = alpha-copaene + diphosphate. The catalysed reaction is (2E,6E)-farnesyl diphosphate = delta-cadinene + diphosphate. It functions in the pathway secondary metabolite biosynthesis; terpenoid biosynthesis. Sesquiterpene synthase converting farnesyl diphosphate to alpha copaene and delta-cadinene as the major products. In Phyla dulcis (Aztec sweet herb), this protein is Bifunctional sesquiterpene synthase 1.